The primary structure comprises 238 residues: MIYKSIAERLRIRLNSADFTLNSLLPGEKKLAEEFAVSRMTIRKAIDLLVAWGLVVRRHGSGTYLVRKDVLHQTASLTGLVEVLKRQGKTVTSQVLIFEIMPAPPAIASQLRIQINEQIYFSRRVRFVEGKPLMLEDSYMPVKLFRNLSLQHLEGSKFEYIEQECGILIGGNYESLTPVLADRLLARQMKVAEHTPLLRITSLSYSESGEFLNYSVMFRNASEYQVEYHLRRLHPEKS.

One can recognise an HTH gntR-type domain in the interval 1 to 68 (MIYKSIAERL…HGSGTYLVRK (68 aa)). Residues 28–47 (EKKLAEEFAVSRMTIRKAID) constitute a DNA-binding region (H-T-H motif).

This is an uncharacterized protein from Escherichia coli (strain K12).